Here is a 639-residue protein sequence, read N- to C-terminus: Cystathionine gamma-synthase (639 aa).

N6-(pyridoxal phosphate)lysine is present on Lys-443.

It belongs to the trans-sulfuration enzymes family. MET7 subfamily. The cofactor is pyridoxal 5'-phosphate.

The protein localises to the cytoplasm. It is found in the nucleus. The enzyme catalyses O-succinyl-L-homoserine + L-cysteine = L,L-cystathionine + succinate + H(+). Its pathway is amino-acid biosynthesis; L-methionine biosynthesis via de novo pathway; L-cystathionine from O-succinyl-L-homoserine: step 1/1. Its function is as follows. Catalyzes the formation of L-cystathionine from O-succinyl-L-homoserine (OSHS) and L-cysteine, via a gamma-replacement reaction. In the absence of thiol, catalyzes gamma-elimination to form 2-oxobutanoate, succinate and ammonia. The polypeptide is Cystathionine gamma-synthase (Saccharomyces cerevisiae (strain ATCC 204508 / S288c) (Baker's yeast)).